Here is a 405-residue protein sequence, read N- to C-terminus: 8-amino-7-oxononanoate synthase (405 aa).

Arg23 contacts substrate. 114 to 115 provides a ligand contact to pyridoxal 5'-phosphate; it reads GY. His139 serves as a coordination point for substrate. Pyridoxal 5'-phosphate is bound by residues Ser185, His213, and Thr245. N6-(pyridoxal phosphate)lysine is present on Lys248. Thr366 is a binding site for substrate.

This sequence belongs to the class-II pyridoxal-phosphate-dependent aminotransferase family. BioF subfamily. In terms of assembly, homodimer. It depends on pyridoxal 5'-phosphate as a cofactor.

It carries out the reaction 6-carboxyhexanoyl-[ACP] + L-alanine + H(+) = (8S)-8-amino-7-oxononanoate + holo-[ACP] + CO2. It participates in cofactor biosynthesis; biotin biosynthesis. Catalyzes the decarboxylative condensation of pimeloyl-[acyl-carrier protein] and L-alanine to produce 8-amino-7-oxononanoate (AON), [acyl-carrier protein], and carbon dioxide. This is 8-amino-7-oxononanoate synthase from Delftia acidovorans (strain DSM 14801 / SPH-1).